We begin with the raw amino-acid sequence, 335 residues long: Ornithine carbamoyltransferase (335 aa).

Residues 56 to 59, glutamine 83, arginine 107, and 134 to 137 each bind carbamoyl phosphate; these read STRT and HPTQ. Residues asparagine 168, aspartate 232, and 236 to 237 each bind L-ornithine; that span reads SM. Residues 274–275 and arginine 320 contribute to the carbamoyl phosphate site; that span reads CL.

Belongs to the aspartate/ornithine carbamoyltransferase superfamily. OTCase family.

It is found in the cytoplasm. The catalysed reaction is carbamoyl phosphate + L-ornithine = L-citrulline + phosphate + H(+). It functions in the pathway amino-acid biosynthesis; L-arginine biosynthesis; L-arginine from L-ornithine and carbamoyl phosphate: step 1/3. Reversibly catalyzes the transfer of the carbamoyl group from carbamoyl phosphate (CP) to the N(epsilon) atom of ornithine (ORN) to produce L-citrulline. The protein is Ornithine carbamoyltransferase of Pectobacterium atrosepticum (strain SCRI 1043 / ATCC BAA-672) (Erwinia carotovora subsp. atroseptica).